We begin with the raw amino-acid sequence, 744 residues long: Polyadenylate-binding protein, cytoplasmic and nuclear (744 aa).

Residues 1-11 (MSEVANSTSPV) show a composition bias toward polar residues. Residues 1-42 (MSEVANSTSPVQDGADANGAQINTNVPAASGDAPTPTTAAQQ) are disordered. The span at 33-42 (APTPTTAAQQ) shows a compositional bias: low complexity. RRM domains are found at residues 48 to 126 (ASLY…WSQR), 136 to 213 (GNVF…HHIP), 229 to 306 (TNIY…RAQK), and 332 to 462 (VNLY…LAQR). Disordered regions lie at residues 368–411 (EEKK…AGDK), 527–550 (GRGAGFPGGMPGQQGGRGGPNAQQ), 607–651 (IAGG…PGVD), and 723–744 (VKNKEGDGEKEAPKEESKEEKA). Positions 376-397 (KEVKEEKKEDEKKEDEEAKEGS) are enriched in basic and acidic residues. Gly residues-rich tracts occupy residues 527–545 (GRGAGFPGGMPGQQGGRGG), 609–632 (GGPGIRGGQGGFPQGGRGAPGGRG), and 640–649 (PQGGRPGGPG). One can recognise a PABC domain in the interval 647 to 724 (GPGVDMSVLS…AMSVYDEYVK (78 aa)).

This sequence belongs to the polyadenylate-binding protein type-1 family.

Its subcellular location is the cytoplasm. It localises to the nucleus. Binds the poly(A) tail of mRNA. Appears to be an important mediator of the multiple roles of the poly(A) tail in mRNA biogenesis, stability and translation. In the nucleus, involved in both mRNA cleavage and polyadenylation. Is also required for efficient mRNA export to the cytoplasm. Acts in concert with a poly(A)-specific nuclease (PAN) to affect poly(A) tail shortening, which may occur concomitantly with either nucleocytoplasmic mRNA transport or translational initiation. In the cytoplasm, stimulates translation initiation and regulates mRNA decay through translation termination-coupled poly(A) shortening, probably mediated by PAN. The polypeptide is Polyadenylate-binding protein, cytoplasmic and nuclear (PAB1) (Phaeosphaeria nodorum (strain SN15 / ATCC MYA-4574 / FGSC 10173) (Glume blotch fungus)).